A 394-amino-acid polypeptide reads, in one-letter code: Protein NDRG1 (394 aa).

Ser-2 carries the N-acetylserine modification. Phosphoserine occurs at positions 2, 319, and 326. Residues 325–394 (RSRTASGSSV…AGPKSMEVSC (70 aa)) are disordered. Residues 327 to 339 (RTASGSSVTSLDG) show a composition bias toward polar residues. At Thr-328 the chain carries Phosphothreonine; by SGK1. A phosphoserine; by SGK1 mark is found at Ser-330 and Ser-332. Ser-333 carries the post-translational modification Phosphoserine. Thr-335 is modified (phosphothreonine). A Phosphoserine modification is found at Ser-336. Repeat copies occupy residues 339 to 348 (GTRSRSHTSE), 349 to 358 (GTRSRSHTSE), and 359 to 368 (GTRSRSHTSE). Positions 339–368 (GTRSRSHTSEGTRSRSHTSEGTRSRSHTSE) are 3 X 10 AA tandem repeats of G-[PST]-R-S-R-S-H-T-S-E. A Phosphothreonine modification is found at Thr-340. Ser-342 is modified (phosphoserine). Basic and acidic residues predominate over residues 345-371 (HTSEGTRSRSHTSEGTRSRSHTSEGAH). The residue at position 346 (Thr-346) is a Phosphothreonine; by SGK1. Ser-352 is subject to Phosphoserine. Thr-356 bears the Phosphothreonine; by SGK1 mark. Residues Ser-362 and Ser-364 each carry the phosphoserine modification. 2 positions are modified to phosphothreonine: Thr-366 and Thr-375.

It belongs to the NDRG family. In terms of assembly, interacts with RAB4A (membrane-bound form); the interaction involves NDRG1 in vesicular recycling ofCDH1. Interacts with APOA1, APOA2, PRA1 and RTN1. Under stress conditions, phosphorylated in the C-terminal on many serine and threonine residues. Phosphorylated in vitro by PKA. Phosphorylation enhanced by increased intracellular cAMP levels. Homocysteine induces dephosphorylation. Phosphorylation by SGK1 is cell cycle dependent.

Its subcellular location is the cytoplasm. It is found in the cytosol. The protein localises to the cytoskeleton. The protein resides in the microtubule organizing center. It localises to the centrosome. Its subcellular location is the nucleus. It is found in the cell membrane. In terms of biological role, stress-responsive protein involved in hormone responses, cell growth, and differentiation. Acts as a tumor suppressor in many cell types. Necessary but not sufficient for p53/TP53-mediated caspase activation and apoptosis. Has a role in cell trafficking notably of the Schwann cell and is necessary for the maintenance and development of the peripheral nerve myelin sheath. Required for vesicular recycling of CDH1 and TF. May also function in lipid trafficking. Protects cells from spindle disruption damage. Functions in p53/TP53-dependent mitotic spindle checkpoint. Regulates microtubule dynamics and maintains euploidy. This is Protein NDRG1 (Ndrg1) from Macaca fascicularis (Crab-eating macaque).